We begin with the raw amino-acid sequence, 204 residues long: NADH-quinone oxidoreductase subunit C (204 aa).

This sequence belongs to the complex I 30 kDa subunit family. As to quaternary structure, NDH-1 is composed of 14 different subunits. Subunits NuoB, C, D, E, F, and G constitute the peripheral sector of the complex.

It is found in the cell inner membrane. It catalyses the reaction a quinone + NADH + 5 H(+)(in) = a quinol + NAD(+) + 4 H(+)(out). Its function is as follows. NDH-1 shuttles electrons from NADH, via FMN and iron-sulfur (Fe-S) centers, to quinones in the respiratory chain. The immediate electron acceptor for the enzyme in this species is believed to be ubiquinone. Couples the redox reaction to proton translocation (for every two electrons transferred, four hydrogen ions are translocated across the cytoplasmic membrane), and thus conserves the redox energy in a proton gradient. The chain is NADH-quinone oxidoreductase subunit C from Vesicomyosocius okutanii subsp. Calyptogena okutanii (strain HA).